The primary structure comprises 850 residues: RPA-related protein RADX (850 aa).

Residues 1-31 (MSGESGQPQPGPSHAGLYLEHPERDQAGVPG) form a disordered region. Residues 228-331 (WNSRKNFPAL…LISTMEICLN (104 aa)) constitute a DNA-binding region (OB). 2 disordered regions span residues 575–612 (EAFWNASRPSTSQAAGKEDHCHERGSKRSQDDRPMGSQ) and 632–671 (GPSANPVPVPQPHSSAQMKGSKHNTPSQESSTAYTTGKSR). Basic and acidic residues predominate over residues 590–608 (GKEDHCHERGSKRSQDDRP). Polar residues predominate over residues 643–668 (PHSSAQMKGSKHNTPSQESSTAYTTG).

The protein resides in the chromosome. In terms of biological role, single-stranded DNA-binding protein recruited to replication forks to maintain genome stability. Prevents fork collapse by antagonizing the accumulation of RAD51 at forks to ensure the proper balance of fork remodeling and protection without interfering with the capacity of cells to complete homologous recombination of double-strand breaks. This chain is RPA-related protein RADX, found in Mus musculus (Mouse).